A 265-amino-acid chain; its full sequence is Orotidine 5'-phosphate decarboxylase (265 aa).

Substrate-binding positions include Asp38, 60-62 (KTH), 91-100 (DRKFADIGNT), Tyr213, and Arg232. Lys93 (proton donor) is an active-site residue.

This sequence belongs to the OMP decarboxylase family.

It catalyses the reaction orotidine 5'-phosphate + H(+) = UMP + CO2. The protein operates within pyrimidine metabolism; UMP biosynthesis via de novo pathway; UMP from orotate: step 2/2. This chain is Orotidine 5'-phosphate decarboxylase (pyrG), found in Rhizopus oryzae (Mucormycosis agent).